A 240-amino-acid chain; its full sequence is Putative glycyl-radical enzyme activating enzyme MJ1227 (240 aa).

One can recognise a Radical SAM core domain in the interval 14–232 (IDYPKKASAV…KKYIDNVVIR (219 aa)). Residues C29, C33, and C36 each contribute to the [4Fe-4S] cluster site. S-adenosyl-L-methionine-binding positions include 35-37 (YCH), G71, and 126-128 (FDK).

The protein belongs to the organic radical-activating enzymes family. [4Fe-4S] cluster serves as cofactor.

The enzyme catalyses glycyl-[protein] + reduced [flavodoxin] + S-adenosyl-L-methionine = glycin-2-yl radical-[protein] + semiquinone [flavodoxin] + 5'-deoxyadenosine + L-methionine + H(+). The polypeptide is Putative glycyl-radical enzyme activating enzyme MJ1227 (Methanocaldococcus jannaschii (strain ATCC 43067 / DSM 2661 / JAL-1 / JCM 10045 / NBRC 100440) (Methanococcus jannaschii)).